The sequence spans 190 residues: uncharacterized protein (190 aa).

Residues 12-34 (LLGLSIFLTTFLFVANFLPGIFA) traverse the membrane as a helical segment.

It is found in the membrane. This is an uncharacterized protein from Archaeoglobus fulgidus (strain ATCC 49558 / DSM 4304 / JCM 9628 / NBRC 100126 / VC-16).